Reading from the N-terminus, the 308-residue chain is Methionyl-tRNA formyltransferase (308 aa).

107–110 contributes to the (6S)-5,6,7,8-tetrahydrofolate binding site; that stretch reads SLLP.

It belongs to the Fmt family.

It carries out the reaction L-methionyl-tRNA(fMet) + (6R)-10-formyltetrahydrofolate = N-formyl-L-methionyl-tRNA(fMet) + (6S)-5,6,7,8-tetrahydrofolate + H(+). Attaches a formyl group to the free amino group of methionyl-tRNA(fMet). The formyl group appears to play a dual role in the initiator identity of N-formylmethionyl-tRNA by promoting its recognition by IF2 and preventing the misappropriation of this tRNA by the elongation apparatus. The sequence is that of Methionyl-tRNA formyltransferase from Carboxydothermus hydrogenoformans (strain ATCC BAA-161 / DSM 6008 / Z-2901).